The sequence spans 291 residues: ATP synthase gamma chain (291 aa).

This sequence belongs to the ATPase gamma chain family. F-type ATPases have 2 components, CF(1) - the catalytic core - and CF(0) - the membrane proton channel. CF(1) has five subunits: alpha(3), beta(3), gamma(1), delta(1), epsilon(1). CF(0) has three main subunits: a, b and c.

The protein localises to the cell inner membrane. Functionally, produces ATP from ADP in the presence of a proton gradient across the membrane. The gamma chain is believed to be important in regulating ATPase activity and the flow of protons through the CF(0) complex. In Rhodopseudomonas palustris (strain ATCC BAA-98 / CGA009), this protein is ATP synthase gamma chain.